A 382-amino-acid chain; its full sequence is uncharacterized protein (382 aa).

This is an uncharacterized protein from Orgyia pseudotsugata multicapsid polyhedrosis virus (OpMNPV).